Reading from the N-terminus, the 803-residue chain is Ras GTPase-activating protein 4B (803 aa).

C2 domains lie at 1–105 (MAKR…SGWA) and 116–232 (VQGE…EGWF). Ca(2+) is bound by residues Asp21, Asp27, Asp74, Asp76, Ser79, Asp82, Asp149, Asp155, Asp202, Asp204, Ser207, and Asp210. The region spanning 318-546 (GLAKDFLDLL…AQLKDFITKL (229 aa)) is the Ras-GAP domain. A PH domain is found at 566–673 (PPVKEGPLFI…WLSALRKVSI (108 aa)). The Btk-type zinc-finger motif lies at 675–711 (NTGLLGSYHPGVFRGDKWSCCHQKEKTGQGCDKTRSR). Zn(2+) is bound by residues His683, Cys694, Cys695, and Cys705. Residues 781–803 (EAHSSSPAGSPPSEPNCLLELQT) form a disordered region.

It depends on Ca(2+) as a cofactor.

It localises to the cytoplasm. It is found in the cytosol. Its subcellular location is the cell membrane. Its function is as follows. Ca(2+)-dependent Ras GTPase-activating protein, that may play a role in the Ras-MAPK pathway. The chain is Ras GTPase-activating protein 4B (RASA4B) from Homo sapiens (Human).